We begin with the raw amino-acid sequence, 299 residues long: GTPase Era (299 aa).

The Era-type G domain occupies 4–171 (KSGFVAILGR…MEILKENLDE (168 aa)). Residues 12-19 (GRPNVGKS) form a G1 region. 12-19 (GRPNVGKS) is a binding site for GTP. Positions 38–42 (QTTRN) are G2. A G3 region spans residues 59-62 (DTPG). Residues 59-63 (DTPGI) and 121-124 (NKID) contribute to the GTP site. The interval 121–124 (NKID) is G4. The tract at residues 150-152 (ISA) is G5. Residues 202–280 (TREEIPHSVA…FLETWVKVKK (79 aa)) form the KH type-2 domain.

This sequence belongs to the TRAFAC class TrmE-Era-EngA-EngB-Septin-like GTPase superfamily. Era GTPase family. In terms of assembly, monomer.

The protein resides in the cytoplasm. It is found in the cell membrane. In terms of biological role, an essential GTPase that binds both GDP and GTP, with rapid nucleotide exchange. Plays a role in 16S rRNA processing and 30S ribosomal subunit biogenesis and possibly also in cell cycle regulation and energy metabolism. The protein is GTPase Era of Streptococcus suis (strain 98HAH33).